Here is a 273-residue protein sequence, read N- to C-terminus: Hydroxynaphthalene reductase arp2 (273 aa).

4 residues coordinate NADP(+): I24, D70, N97, and R130. Active-site proton donor residues include S146 and S147. 4 residues coordinate NADP(+): Y160, K164, V193, and S195. The active-site Proton acceptor is Y160. K164 functions as the Lowers pKa of active site Tyr in the catalytic mechanism.

This sequence belongs to the short-chain dehydrogenases/reductases (SDR) family.

Its subcellular location is the endosome. The protein operates within pigment biosynthesis; melanin biosynthesis. Its activity is regulated as follows. Tricyclazole and pyroquilon inhibit arp2 hydroxynaphtalene reductase activity. In terms of biological role, hydroxynaphthalene reductase; part of the gene cluster that mediates the biosynthesis of dihydroxynaphthalene (DHN)-melanin, a bluish-green pigment and a structural component of the conidial wall. The first step of the pathway is the production of the heptaketide naphtopyrone YWA1 by the polyketide synthase alb1 though condensation of acetyl-CoA with malonyl-CoA. The naphtopyrone YWA1 is then converted to the pentaketide 1,3,6,8-tetrahydroxynaphthalene (1,3,6,8-THN) by the heptaketide hydrolyase ayg1 though chain-length shortening. 1,3,6,8-THN is substrate of the hydroxynaphthalene reductase arp2 to yield scytalone. The scytalone dehydratase arp1 then reduces scytalone to 1,3,8-THN. 1,3,8-THN is also substrate of the hydroxynaphthalene reductase arp2 to yield vermelone. Vermelone is further converted by the multicopper oxidase abr1 to 1,8-DHN. Finally the laccase abr2 transforms 1,8-DHN to DHN-melanin. DHN-melanin biosynthesis appears to be initiated in endosomes where early enzymes (abl1, ayg1, arp1 and arp2) localize, with exocytosis leading to melanin deposition on the cell surface where late enzymes (abr1 and abr2) localize. DHN-melanin is an important structural component of the outer cell wall and is required for the presence of conidial surface hydrophobins. DHN-melanin also plays a crucial role in fungal virulence, including a protective role against the host's immune defenses. DHN-melanin also protects conidia against amoeba predation. This is Hydroxynaphthalene reductase arp2 from Aspergillus fumigatus (strain ATCC MYA-4609 / CBS 101355 / FGSC A1100 / Af293) (Neosartorya fumigata).